Here is a 195-residue protein sequence, read N- to C-terminus: Thymidine kinase (195 aa).

Residues 15-22 (GSMFSGKS) and 88-91 (DEVQ) contribute to the ATP site. Glu89 serves as the catalytic Proton acceptor. Residues Cys145, Cys148, Cys183, and Cys186 each coordinate Zn(2+).

This sequence belongs to the thymidine kinase family. In terms of assembly, homotetramer.

The protein localises to the cytoplasm. It carries out the reaction thymidine + ATP = dTMP + ADP + H(+). The chain is Thymidine kinase from Bacillus cereus (strain 03BB102).